Reading from the N-terminus, the 296-residue chain is Homoserine kinase (296 aa).

92–102 (PQSRGLGSSAA) contributes to the ATP binding site.

It belongs to the GHMP kinase family. Homoserine kinase subfamily.

Its subcellular location is the cytoplasm. It carries out the reaction L-homoserine + ATP = O-phospho-L-homoserine + ADP + H(+). It participates in amino-acid biosynthesis; L-threonine biosynthesis; L-threonine from L-aspartate: step 4/5. In terms of biological role, catalyzes the ATP-dependent phosphorylation of L-homoserine to L-homoserine phosphate. In Cutibacterium acnes (strain DSM 16379 / KPA171202) (Propionibacterium acnes), this protein is Homoserine kinase.